Here is a 645-residue protein sequence, read N- to C-terminus: Phosphomethylpyrimidine synthase (645 aa).

Residues 1-12 (MSHNTVIPTTDI) are compositionally biased toward polar residues. A disordered region spans residues 1–25 (MSHNTVIPTTDISPKPDPARPRKAQ). Substrate-binding positions include asparagine 253, methionine 282, tyrosine 311, histidine 347, 367–369 (SRG), 408–411 (DGLR), and glutamate 447. Residue histidine 451 participates in Zn(2+) binding. Tyrosine 474 is a binding site for substrate. Histidine 515 lines the Zn(2+) pocket. Positions 595, 598, and 603 each coordinate [4Fe-4S] cluster.

Belongs to the ThiC family. In terms of assembly, homodimer. Requires [4Fe-4S] cluster as cofactor.

It catalyses the reaction 5-amino-1-(5-phospho-beta-D-ribosyl)imidazole + S-adenosyl-L-methionine = 4-amino-2-methyl-5-(phosphooxymethyl)pyrimidine + CO + 5'-deoxyadenosine + formate + L-methionine + 3 H(+). It participates in cofactor biosynthesis; thiamine diphosphate biosynthesis. Functionally, catalyzes the synthesis of the hydroxymethylpyrimidine phosphate (HMP-P) moiety of thiamine from aminoimidazole ribotide (AIR) in a radical S-adenosyl-L-methionine (SAM)-dependent reaction. In Photorhabdus laumondii subsp. laumondii (strain DSM 15139 / CIP 105565 / TT01) (Photorhabdus luminescens subsp. laumondii), this protein is Phosphomethylpyrimidine synthase.